The chain runs to 58 residues: Ribosome modulation factor (58 aa).

It belongs to the ribosome modulation factor family.

It localises to the cytoplasm. Its function is as follows. During stationary phase, converts 70S ribosomes to an inactive dimeric form (100S ribosomes). This chain is Ribosome modulation factor, found in Tolumonas auensis (strain DSM 9187 / NBRC 110442 / TA 4).